The following is a 210-amino-acid chain: Ribosomal RNA large subunit methyltransferase E (210 aa).

Residues Gly-64, Trp-66, Asp-84, Asp-100, and Asp-125 each coordinate S-adenosyl-L-methionine. Residue Lys-165 is the Proton acceptor of the active site.

The protein belongs to the class I-like SAM-binding methyltransferase superfamily. RNA methyltransferase RlmE family.

The protein localises to the cytoplasm. The enzyme catalyses uridine(2552) in 23S rRNA + S-adenosyl-L-methionine = 2'-O-methyluridine(2552) in 23S rRNA + S-adenosyl-L-homocysteine + H(+). Its function is as follows. Specifically methylates the uridine in position 2552 of 23S rRNA at the 2'-O position of the ribose in the fully assembled 50S ribosomal subunit. The polypeptide is Ribosomal RNA large subunit methyltransferase E (Chromohalobacter salexigens (strain ATCC BAA-138 / DSM 3043 / CIP 106854 / NCIMB 13768 / 1H11)).